The chain runs to 170 residues: Adenine phosphoribosyltransferase (170 aa).

This sequence belongs to the purine/pyrimidine phosphoribosyltransferase family. As to quaternary structure, homodimer.

It is found in the cytoplasm. The catalysed reaction is AMP + diphosphate = 5-phospho-alpha-D-ribose 1-diphosphate + adenine. Its pathway is purine metabolism; AMP biosynthesis via salvage pathway; AMP from adenine: step 1/1. Its function is as follows. Catalyzes a salvage reaction resulting in the formation of AMP, that is energically less costly than de novo synthesis. In Lactococcus lactis subsp. cremoris (strain SK11), this protein is Adenine phosphoribosyltransferase.